A 613-amino-acid chain; its full sequence is Zinc metalloproteinase-disintegrin-like MTP8 (613 aa).

An N-terminal signal peptide occupies residues 1-20 (MIEVLLVTICFTVFPYQGSP). Positions 21–191 (IILESGNVND…DETIEKISQL (171 aa)) are excised as a propeptide. The Peptidase M12B domain occupies 205–401 (KYIELYVVVD…VRPQCILNKP (197 aa)). Glu-208 contributes to the Ca(2+) binding site. The N-linked (GlcNAc...) asparagine glycan is linked to Asn-282. Asp-292 is a Ca(2+) binding site. Cystine bridges form between Cys-316-Cys-396, Cys-356-Cys-380, and Cys-358-Cys-363. Zn(2+) contacts are provided by His-341, His-345, and His-351. Positions 396, 399, 414, 416, 418, 421, and 424 each coordinate Ca(2+). Positions 409–495 (PPVCGNYFVE…KCPTDSFQRN (87 aa)) constitute a Disintegrin domain. Disulfide bonds link Cys-412–Cys-441, Cys-423–Cys-436, Cys-425–Cys-431, Cys-435–Cys-458, Cys-449–Cys-455, Cys-454–Cys-480, Cys-467–Cys-487, Cys-474–Cys-506, Cys-499–Cys-511, Cys-518–Cys-568, Cys-533–Cys-575, Cys-543–Cys-577, Cys-546–Cys-556, Cys-563–Cys-601, and Cys-595–Cys-606. A glycan (N-linked (GlcNAc...) asparagine) is linked at Asn-437. The D/ECD-tripeptide signature appears at 473 to 475 (DCD). The Ca(2+) site is built by Asp-475, Leu-476, Glu-478, and Asp-490. N-linked (GlcNAc...) asparagine glycosylation is found at Asn-550 and Asn-572.

It belongs to the venom metalloproteinase (M12B) family. P-III subfamily. As to quaternary structure, monomer. The cofactor is Zn(2+). As to expression, expressed by the venom gland.

It is found in the secreted. Its function is as follows. Snake venom zinc metalloproteinase that may impair hemostasis in the prey. This Drysdalia coronoides (White-lipped snake) protein is Zinc metalloproteinase-disintegrin-like MTP8.